The primary structure comprises 562 residues: T-complex protein 1 subunit epsilon (562 aa).

This sequence belongs to the TCP-1 chaperonin family. In terms of assembly, heterooligomeric complex of about 850 to 900 kDa that forms two stacked rings, 12 to 16 nm in diameter.

It localises to the cytoplasm. Molecular chaperone; assists the folding of proteins upon ATP hydrolysis. Known to play a role, in vitro, in the folding of actin and tubulin. In yeast may play a role in mitotic spindle formation. The polypeptide is T-complex protein 1 subunit epsilon (CCT5) (Saccharomyces cerevisiae (strain ATCC 204508 / S288c) (Baker's yeast)).